Here is a 225-residue protein sequence, read N- to C-terminus: Orotate phosphoribosyltransferase (225 aa).

Residues lysine 26, 73 to 74 (YK), arginine 100, lysine 101, lysine 104, histidine 106, and 127 to 135 (EDVTTAGTS) each bind 5-phospho-alpha-D-ribose 1-diphosphate. Positions 131 and 160 each coordinate orotate.

It belongs to the purine/pyrimidine phosphoribosyltransferase family. PyrE subfamily. As to quaternary structure, homodimer. Mg(2+) is required as a cofactor.

It carries out the reaction orotidine 5'-phosphate + diphosphate = orotate + 5-phospho-alpha-D-ribose 1-diphosphate. It participates in pyrimidine metabolism; UMP biosynthesis via de novo pathway; UMP from orotate: step 1/2. Its function is as follows. Catalyzes the transfer of a ribosyl phosphate group from 5-phosphoribose 1-diphosphate to orotate, leading to the formation of orotidine monophosphate (OMP). The polypeptide is Orotate phosphoribosyltransferase (Lachnoclostridium phytofermentans (strain ATCC 700394 / DSM 18823 / ISDg) (Clostridium phytofermentans)).